The following is a 167-amino-acid chain: SsrA-binding protein (167 aa).

The segment at 139–167 (QAHDKRHAEKEREWQRDKQRIMRAHNRNA) is disordered. The span at 144-158 (RHAEKEREWQRDKQR) shows a compositional bias: basic and acidic residues.

The protein belongs to the SmpB family.

It is found in the cytoplasm. Required for rescue of stalled ribosomes mediated by trans-translation. Binds to transfer-messenger RNA (tmRNA), required for stable association of tmRNA with ribosomes. tmRNA and SmpB together mimic tRNA shape, replacing the anticodon stem-loop with SmpB. tmRNA is encoded by the ssrA gene; the 2 termini fold to resemble tRNA(Ala) and it encodes a 'tag peptide', a short internal open reading frame. During trans-translation Ala-aminoacylated tmRNA acts like a tRNA, entering the A-site of stalled ribosomes, displacing the stalled mRNA. The ribosome then switches to translate the ORF on the tmRNA; the nascent peptide is terminated with the 'tag peptide' encoded by the tmRNA and targeted for degradation. The ribosome is freed to recommence translation, which seems to be the essential function of trans-translation. The polypeptide is SsrA-binding protein (Xylella fastidiosa (strain 9a5c)).